Consider the following 150-residue polypeptide: SsrA-binding protein (150 aa).

The protein belongs to the SmpB family.

It is found in the cytoplasm. Required for rescue of stalled ribosomes mediated by trans-translation. Binds to transfer-messenger RNA (tmRNA), required for stable association of tmRNA with ribosomes. tmRNA and SmpB together mimic tRNA shape, replacing the anticodon stem-loop with SmpB. tmRNA is encoded by the ssrA gene; the 2 termini fold to resemble tRNA(Ala) and it encodes a 'tag peptide', a short internal open reading frame. During trans-translation Ala-aminoacylated tmRNA acts like a tRNA, entering the A-site of stalled ribosomes, displacing the stalled mRNA. The ribosome then switches to translate the ORF on the tmRNA; the nascent peptide is terminated with the 'tag peptide' encoded by the tmRNA and targeted for degradation. The ribosome is freed to recommence translation, which seems to be the essential function of trans-translation. The chain is SsrA-binding protein from Campylobacter jejuni subsp. doylei (strain ATCC BAA-1458 / RM4099 / 269.97).